Reading from the N-terminus, the 159-residue chain is Phosphopantetheine adenylyltransferase (159 aa).

A substrate-binding site is contributed by serine 9. Residues 9 to 10 (SF) and histidine 17 contribute to the ATP site. The substrate site is built by lysine 41, leucine 73, and lysine 87. ATP is bound by residues 88 to 90 (GLR), glutamate 98, and 123 to 129 (YSYLSSS).

The protein belongs to the bacterial CoaD family. Homohexamer. It depends on Mg(2+) as a cofactor.

Its subcellular location is the cytoplasm. It catalyses the reaction (R)-4'-phosphopantetheine + ATP + H(+) = 3'-dephospho-CoA + diphosphate. It functions in the pathway cofactor biosynthesis; coenzyme A biosynthesis; CoA from (R)-pantothenate: step 4/5. Reversibly transfers an adenylyl group from ATP to 4'-phosphopantetheine, yielding dephospho-CoA (dPCoA) and pyrophosphate. In Clostridium botulinum (strain Alaska E43 / Type E3), this protein is Phosphopantetheine adenylyltransferase.